The chain runs to 182 residues: uncharacterized protein (182 aa).

2 disordered regions span residues 17–53 (AVSQ…QGSK) and 128–159 (DSLG…PKRS). Positions 42–53 (PQPQCPSAQGSK) are enriched in polar residues. Residues 129-138 (SLGSSASSSS) show a composition bias toward low complexity.

This is an uncharacterized protein from Homo sapiens (Human).